A 219-amino-acid polypeptide reads, in one-letter code: Ribose-5-phosphate isomerase A (219 aa).

Substrate is bound by residues 28–31 (TGST), 81–84 (DGAD), and 94–97 (KGGG). The active-site Proton acceptor is the E103. K121 is a substrate binding site.

This sequence belongs to the ribose 5-phosphate isomerase family. As to quaternary structure, homodimer.

It carries out the reaction aldehydo-D-ribose 5-phosphate = D-ribulose 5-phosphate. The protein operates within carbohydrate degradation; pentose phosphate pathway; D-ribose 5-phosphate from D-ribulose 5-phosphate (non-oxidative stage): step 1/1. Catalyzes the reversible conversion of ribose-5-phosphate to ribulose 5-phosphate. This is Ribose-5-phosphate isomerase A from Shewanella pealeana (strain ATCC 700345 / ANG-SQ1).